The primary structure comprises 531 residues: MNTKGIIAKLTAGALIANLLICPANTLAEKKTFTDVPNWAQQSVNYLMKKALDGKPDGTFSPSEKIDRGSAAKLMAMVLGLQINKQAKPSFQDAKNHWASPYIAAVEKAGVIYGDGSGNFNPSKDIDRASMASMLVEAYKLNNRIIGDLPTQFEDLKGHWGAKLANALVALGISKGTGDGWKPNGIVTRAEAVQFIAQTDMKKADTSKRMYMNRHFITYHQPSLSSGVTSNQHAPQIIVVKEQRADGWIKIVTNIGDKWTPLYEKRETIHSTFTTYPEASHSSKVLGTHSPQTVTVIEEKGSWIRIRTNAGFQWLDKNQLTLPKKQNNFLEGKTIIIDPGHGGIDGGHKGIYMNESPVVYDTAVRVQKLFAQKTPFTALLTRDAYSRPGKNATDSLGKRVEFAKKNKGDIFVSIHANGFNGNAHGTETFYYKAPTQKSNPYVNDSRILAEKIQKRLITALQTRDRGVKIGNLYVLRENTMPSVLTELGFVDNKADGKKLDSPEWRQRAAEAIYAGILDYYEWKGHNMSAYY.

The N-terminal stretch at 1 to 28 (MNTKGIIAKLTAGALIANLLICPANTLA) is a signal peptide. SLH domains follow at residues 29 to 85 (EKKT…QINK), 86 to 149 (QAKP…IGDL), and 150 to 210 (PTQF…SKRM). The MurNAc-LAA domain occupies 335-517 (IIIDPGHGGI…AAEAIYAGIL (183 aa)).

This sequence in the C-terminal section; belongs to the N-acetylmuramoyl-L-alanine amidase 3 family.

Its subcellular location is the secreted. It is found in the cell wall. The protein localises to the S-layer. This is an uncharacterized protein from Bacillus anthracis.